A 424-amino-acid chain; its full sequence is Exodeoxyribonuclease 7 large subunit (424 aa).

This sequence belongs to the XseA family. In terms of assembly, heterooligomer composed of large and small subunits.

The protein localises to the cytoplasm. The catalysed reaction is Exonucleolytic cleavage in either 5'- to 3'- or 3'- to 5'-direction to yield nucleoside 5'-phosphates.. Bidirectionally degrades single-stranded DNA into large acid-insoluble oligonucleotides, which are then degraded further into small acid-soluble oligonucleotides. The chain is Exodeoxyribonuclease 7 large subunit from Cyanothece sp. (strain PCC 7425 / ATCC 29141).